A 628-amino-acid polypeptide reads, in one-letter code: E3 SUMO-protein ligase PIAS3 (628 aa).

The interval 1–200 is interaction with CCAR2; sequence MAELGELKHM…QLRFCLCETS (200 aa). One can recognise an SAP domain in the interval 11–45; that stretch reads VMSFRVSELQVLLGFAGRNKSGRKHELLAKALHLL. Residues 19–23 carry the LXXLL motif motif; the sequence is LQVLL. Glycyl lysine isopeptide (Lys-Gly) (interchain with G-Cter in SUMO2) cross-links involve residues K46, K56, K230, and K307. The PINIT domain maps to 115-280; sequence MHPPLPQPVH…SLSVYLVRQL (166 aa). An SP-RING-type zinc finger spans residues 312–393; it reads PDSEVATTSL…FMEILNSCSD (82 aa). 4 residues coordinate Zn(2+): C343, H345, C366, and C369. The interval 450-460 is SUMO1-binding; sequence LTIESSSDEED. Residues K466 and K482 each participate in a glycyl lysine isopeptide (Lys-Gly) (interchain with G-Cter in SUMO2) cross-link. Residues 571–628 form a disordered region; that stretch reads GPLAPTLGSSHRSSTPAPPPGRVSSIVAPGSSLREGHGGPLPSGPSLTGCRSDVISLD.

This sequence belongs to the PIAS family. In terms of assembly, monomer. Interacts with PLAG1 and ZFHX3. Interacts with STAT5A; the interaction occurs on stimulation by PRL. Binds SUMO1 and UBE2I. Interacts with AR, BCL11A, HMGA2, IRF1 and NCOA2. Interacts with MITF; the interaction inhibits the transcriptional activity of MITF. Interacts with STAT3; the interaction occurs on stimulation by IL6, CNTF or OSM and inhibits the DNA binding activity of STAT3. Interacts with GFI1; the interaction relieves the inhibitory effect of PIAS3 on STAT3-mediated transcriptional activity. Interacts with MTA1. Interacts with CCAR2 (via N-terminus). Interacts with TRIM8. Interacts with PRDM1. Post-translationally, sumoylated. Expressed in kidney, heart, spleen, brain and cerebellum; weak expression, if any, in liver and lung.

The protein localises to the cytoplasm. Its subcellular location is the nucleus. The protein resides in the nucleus speckle. The protein operates within protein modification; protein sumoylation. Its function is as follows. Functions as an E3-type small ubiquitin-like modifier (SUMO) ligase, stabilizing the interaction between UBE2I and the substrate, and as a SUMO-tethering factor. Plays a crucial role as a transcriptional coregulation in various cellular pathways, including the STAT pathway and the steroid hormone signaling pathway. Repressor of STAT3 signaling via inhibiting STAT3 DNA-binding and suppressing cell growth. Repressor of MITF transcriptional activity. Enhances the sumoylation of MTA1 and may participate in its paralog-selective sumoylation. Sumoylates CCAR2 which promotes its interaction with SIRT1. Diminishes the sumoylation of ZFHX3 by preventing the colocalization of ZFHX3 with SUMO1 in the nucleus. The chain is E3 SUMO-protein ligase PIAS3 (Pias3) from Mus musculus (Mouse).